We begin with the raw amino-acid sequence, 244 residues long: Trypsin (244 aa).

Residues M1–A15 form the signal peptide. Residues F16–K21 constitute a propeptide, activation peptide. The Peptidase S1 domain occupies I22–S242. Cystine bridges form between C28-C158, C46-C62, C130-C231, C137-C204, C169-C183, and C194-C218. The active-site Charge relay system is the H61. Positions 73, 75, and 83 each coordinate Ca(2+). The Charge relay system role is filled by D105. The active-site Charge relay system is S198.

This sequence belongs to the peptidase S1 family. Requires Ca(2+) as cofactor.

The protein resides in the secreted. It is found in the extracellular space. It carries out the reaction Preferential cleavage: Arg-|-Xaa, Lys-|-Xaa.. In Xenopus laevis (African clawed frog), this protein is Trypsin.